A 663-amino-acid chain; its full sequence is Probable methylenetetrahydrofolate reductase (NADPH) (663 aa).

Glutamate 76 acts as the Proton donor/acceptor in catalysis. Residues 76–81 (EFFPPR) and 107–108 (TW) contribute to the NAD(+) site. A Phosphothreonine modification is found at threonine 107. Residues 107–108 (TW), histidine 141, 171–173 (RGD), 187–188 (RA), tyrosine 210, 214–217 (HPQA), aspartate 223, and lysine 230 contribute to the FAD site. Residue aspartate 173 coordinates substrate. Substrate contacts are provided by glutamine 241, tyrosine 334, and arginine 338. Serine 408 carries the post-translational modification Phosphoserine. At threonine 465 the chain carries Phosphothreonine. S-adenosyl-L-methionine contacts are provided by residues 477–480 (QPET), 497–501 (TVNSQ), threonine 578, and threonine 591.

Belongs to the methylenetetrahydrofolate reductase family. The cofactor is FAD.

It carries out the reaction (6S)-5-methyl-5,6,7,8-tetrahydrofolate + NADP(+) = (6R)-5,10-methylene-5,6,7,8-tetrahydrofolate + NADPH + H(+). Its pathway is one-carbon metabolism; tetrahydrofolate interconversion. This chain is Probable methylenetetrahydrofolate reductase (NADPH), found in Caenorhabditis elegans.